A 384-amino-acid polypeptide reads, in one-letter code: Histidinol-phosphate aminotransferase (384 aa).

The residue at position 223 (Lys223) is an N6-(pyridoxal phosphate)lysine.

Belongs to the class-II pyridoxal-phosphate-dependent aminotransferase family. Requires pyridoxal 5'-phosphate as cofactor.

It carries out the reaction L-histidinol phosphate + 2-oxoglutarate = 3-(imidazol-4-yl)-2-oxopropyl phosphate + L-glutamate. Its pathway is amino-acid biosynthesis; L-histidine biosynthesis; L-histidine from 5-phospho-alpha-D-ribose 1-diphosphate: step 7/9. The polypeptide is Histidinol-phosphate aminotransferase (his3) (Schizosaccharomyces pombe (strain 972 / ATCC 24843) (Fission yeast)).